The sequence spans 194 residues: N-acetyltransferase (194 aa).

Residues 9–173 form the N-acetyltransferase domain; it reads PQVRPGIAED…GRYWDVRWYE (165 aa).

The protein belongs to the acetyltransferase family. PAT/BAR subfamily.

The polypeptide is N-acetyltransferase (nat) (Streptomyces griseus).